A 171-amino-acid chain; its full sequence is MEKRLQEAQLYKEEGNQRYREGKYRDAVSRYHRALLQLRGLDPSLPSPIPNLGPQGPALTPEQENILHTIQTDCYNNLAACLLQMEPVKYERVREYSQKVLERQPENAKALYRAGVAFFHLQDYDQARHYLLAAVNRQPKDANVRRYLQLTQSELSSYHRKEKQLYLGMFA.

TPR repeat units lie at residues 8–41 (AQLYKEEGNQRYREGKYRDAVSRYHRALLQLRGL), 72–107 (TDCYNNLAACLLQMEPVKYERVREYSQKVLERQPEN), and 108–141 (AKALYRAGVAFFHLQDYDQARHYLLAAVNRQPKD).

Belongs to the TTC9 family.

This Rattus norvegicus (Rat) protein is Tetratricopeptide repeat protein 9C (Ttc9c).